Here is a 3790-residue protein sequence, read N- to C-terminus: Transcription-associated protein 1 (3790 aa).

HEAT repeat units follow at residues 98 to 136, 335 to 381, 740 to 778, 1185 to 1223, 1332 to 1370, and 1826 to 1864; these read RQHVKTIITMMLKILKTDNEENVLVCLRIIIELHKHFRP, TDLR…HVRQ, DLLYQEFLPLLPNLLEGLNRLQSGFHKQHMRDLFVELCL, AKATYEVIHELVRHITSPNTIVREESMVLLKHIGTIQSK, IGYKEKIINIIFKVMESDKSELQTTAFHCMKHFITGVTL, and AIHKKIVLQVFHSLLKGHALEARSIVKQALDVLTPAMPL. An FAT domain is found at 2610–3173; sequence LLAYLGKSHN…YFPIRTLYLT (564 aa). Residues 3429 to 3753 enclose the PI3K/PI4K catalytic domain; the sequence is MPRVEIVQKN…AVDIIMTRFN (325 aa). The segment at 3435–3441 is G-loop; the sequence is VQKNNTA. Residues 3616–3624 are catalytic loop; the sequence is NLTRLNADM. Residues 3636 to 3661 form an activation loop region; the sequence is ISYFKFDVNDDKCQLNQHRPVPFRLT. In terms of domain architecture, FATC spans 3758 to 3790; it reads FDSIENKKISVLVQSATNIDNLCRMDPAWHPWL.

The protein belongs to the PI3/PI4-kinase family. TRA1 subfamily. As to quaternary structure, component of the Tip60 chromatin-remodeling complex which contains the catalytic subunit Tip60 and the subunits Domino, Tra1, Brd8, E(Pc), DMAP1, Pontin, Reptin, Ing3, Act87E, BAP55, Mrg15, MrgBP, Gas41 and YL-1. Probable component of some SAGA complex. Interacts with Spt3, Gcn5, Ada3 and Ada2b. In terms of tissue distribution, ubiquitous.

It is found in the nucleus. Its subcellular location is the cytoplasm. It localises to the chromosome. Functionally, part of the Tip60 chromatin-remodeling complex which is involved in DNA repair. Upon induction of DNA double-strand breaks, this complex acetylates phosphorylated H2AV in nucleosomes and exchanges it with unmodified H2AV. During wing development, required for activity of Notch and its coactivator mam. Function in promoting mam function is likely to involve both the Tip60 and SAGA complexes. In Drosophila melanogaster (Fruit fly), this protein is Transcription-associated protein 1 (Nipped-A).